A 304-amino-acid polypeptide reads, in one-letter code: Nucleotide-binding protein SH2124 (304 aa).

19 to 26 is an ATP binding site; it reads GLSGAGKS. Position 70–73 (70–73) interacts with GTP; the sequence is DLRG.

It belongs to the RapZ-like family.

Displays ATPase and GTPase activities. The sequence is that of Nucleotide-binding protein SH2124 from Staphylococcus haemolyticus (strain JCSC1435).